The sequence spans 548 residues: Synaptic vesicle 2-related protein (548 aa).

Residues 1-87 (MEEDLFQLRQ…GFGRFQWKLS (87 aa)) are Cytoplasmic-facing. Phosphoserine occurs at positions 25 and 31. A helical membrane pass occupies residues 88–108 (VLTGLAWMADAMEMMILSILA). At 109 to 122 (PQLHCEWRLPSWQV) the chain is on the vesicular side. Residues 123-143 (ALLTSVVFIGMMSSSTLWGNI) form a helical membrane-spanning segment. At 144–156 (SDQYGRKTGLKIS) the chain is on the cytoplasmic side. A helical transmembrane segment spans residues 157 to 177 (VFWTLYYGILSAFAPVYSWIL). At 178-180 (VLR) the chain is on the vesicular side. A helical transmembrane segment spans residues 181-201 (GLVGFGIGGVPQSVTLYAEFL). Residues 202–209 (PMKARAKC) lie on the Cytoplasmic side of the membrane. The chain crosses the membrane as a helical span at residues 210–230 (ILLIEVFWAIGTVFEVLLAVF). The Vesicular portion of the chain corresponds to 231 to 238 (VMPSLGWR). Residues 239–259 (WLLLLSAAPLLVFAVLCFWLP) traverse the membrane as a helical segment. The Cytoplasmic segment spans residues 260–316 (ESARYDVLSGNQEKAIATLKRIATENGAPMPLGKLIISRQEDRGKMRDLFTPHFRWT). The chain crosses the membrane as a helical span at residues 317-337 (TLLLWFIWFSNAFSYYGLVLL). Residues 338–373 (TTELFQAGDVCSISSRKKAVEAKCSLACEYLSKEDY) lie on the Vesicular side of the membrane. The chain crosses the membrane as a helical span at residues 374–394 (MDLLWTTLSEFPGVLVTLWVI). Residues 395-401 (DRLGRKK) are Cytoplasmic-facing. A helical membrane pass occupies residues 402–422 (TMALCFVIFSLCSLLLFICIG). At 423–424 (RN) the chain is on the vesicular side. Residues 425 to 445 (VLTLLLFIARAFISGGFQAAY) form a helical membrane-spanning segment. The Cytoplasmic portion of the chain corresponds to 446 to 457 (VYTPEVYPTATR). Residues 458–478 (ALGLGTCSGMARVGALITPFI) traverse the membrane as a helical segment. At 479-489 (AQVMLESSVYL) the chain is on the vesicular side. The helical transmembrane segment at 490-510 (TLAVYSGCCLLAALASCFLPI) threads the bilayer. Residues 511–548 (ETKGRALQESSHREWGQEMVGRGTNSTGVPRSNSGSQE) lie on the Cytoplasmic side of the membrane. Residues 523–548 (REWGQEMVGRGTNSTGVPRSNSGSQE) form a disordered region. Polar residues predominate over residues 533–548 (GTNSTGVPRSNSGSQE). S542 bears the Phosphoserine mark.

It belongs to the major facilitator superfamily. As to expression, detected in brain (at protein level). Detected in brain, in synaptic layers of the cerebellum, hippocampus and cerebral cortex.

Its subcellular location is the cytoplasmic vesicle. It localises to the secretory vesicle. The protein resides in the synaptic vesicle membrane. This Rattus norvegicus (Rat) protein is Synaptic vesicle 2-related protein (Svop).